A 671-amino-acid polypeptide reads, in one-letter code: MSMDISDFYQTFFDEADELLADMEQHLLDLVPESPDAEQLNAIFRAAHSIKGGAGTFGFTILQETTHLMENLLDEARRGEMQLNTDIINLFLETKDIMQEQLDAYKNSEEPDAASFEYICNALRQLALEAKGETTPAVVETAALSAAIQEESVAETESPRDESKLRIVLSRLKANEVDLLEEELGNLATLTDVVKGADSLSATLDGSVAEDDIVAVLCFVIEADQIAFEKVVAAPVEKAQEKTEVAPVAPPAVVAPAAKSAAHEHHAGREKPARERESTSIRVAVEKVDQLINLVGELVITQSMLAQRSNELDPVNHGDLITSMGQLQRNARDLQESVMSIRMMPMEYVFSRFPRLVRDLAGKLGKQVELTLVGSSTELDKSLIERIIDPLTHLVRNSLDHGIEMPEKRLEAGKNVVGNLILSAEHQGGNICIEVTDDGAGLNRERILAKAMSQGMAVNENMTDDEVGMLIFAPGFSTAEQVTDVSGRGVGMDVVKRNIQEMGGHVEIQSKQGSGTTIRILLPLTLAILDGMSVRVAGEVFILPLNAVMESLQPREEDLHPLAGGERVLEVRGEYLPLVELWKVFDVDGAKTEATQGIVVILQSAGRRYALLVDQLIGQHQVVVKNLESNYRKVPGISAATILGDGSVALIVDVSALQGLNREQRMAITAA.

The region spanning 1–105 is the HPt domain; that stretch reads MSMDISDFYQ…DIMQEQLDAY (105 aa). H48 is subject to Phosphohistidine; by autocatalysis. The disordered stretch occupies residues 256–278; that stretch reads PAAKSAAHEHHAGREKPARERES. A compositionally biased stretch (basic and acidic residues) spans 261–278; sequence AAHEHHAGREKPARERES. Residues 274 to 526 form the Histidine kinase domain; sequence RERESTSIRV…TIRILLPLTL (253 aa). The CheW-like domain maps to 528-663; the sequence is ILDGMSVRVA…VSALQGLNRE (136 aa).

Trimer or tetramer.

Its subcellular location is the cytoplasm. It carries out the reaction ATP + protein L-histidine = ADP + protein N-phospho-L-histidine.. Its function is as follows. Involved in the transmission of sensory signals from the chemoreceptors to the flagellar motors. CheA is autophosphorylated; it can transfer its phosphate group to either CheB or CheY. This chain is Chemotaxis protein CheA (cheA), found in Salmonella typhimurium (strain LT2 / SGSC1412 / ATCC 700720).